Reading from the N-terminus, the 434-residue chain is Nucleobase transporter PlUacP (434 aa).

The next 12 helical transmembrane spans lie at 9-29 (LGFQ…LIVG), 39-59 (LAYL…LQVW), 63-83 (FFGI…GPMI), 93-113 (AIYG…GFFG), 118-138 (FFPP…LIPV), 159-179 (ALSF…TGFI), 181-201 (AISI…MGKV), 218-238 (FYFG…LVAI), 306-326 (VVIT…IAAL), 327-347 (TLLI…GMVV), 365-385 (LLII…PNLF), and 394-414 (ILTS…NFLF).

It belongs to the nucleobase:cation symporter-2 (NCS2) (TC 2.A.40) family.

It is found in the cell membrane. Inhibited by the proton gradient disruptor carbonyl cyanide m-chlorophenylhydrazone (CCCP), but not by the sodium gradient disruptor ouabain. Hypoxanthine, xanthine, cytosine and uric acid act as competitive inhibitors. Its function is as follows. Uptake of the purines adenine and guanine, and the pyrimidine uracil. Transport is probably proton-dependent. The polypeptide is Nucleobase transporter PlUacP (Paenibacillus larvae subsp. larvae (strain NRRL B-3650 / LMG 16245)).